The primary structure comprises 1286 residues: DNA-directed RNA polymerase subunit beta' (1286 aa).

Zn(2+)-binding residues include cysteine 58, cysteine 60, cysteine 73, and cysteine 76. 3 residues coordinate Mg(2+): aspartate 533, aspartate 535, and aspartate 537. Zn(2+)-binding residues include cysteine 867, cysteine 944, cysteine 951, and cysteine 954.

The protein belongs to the RNA polymerase beta' chain family. As to quaternary structure, the RNAP catalytic core consists of 2 alpha, 1 beta, 1 beta' and 1 omega subunit. When a sigma factor is associated with the core the holoenzyme is formed, which can initiate transcription. The cofactor is Mg(2+). Zn(2+) serves as cofactor.

It carries out the reaction RNA(n) + a ribonucleoside 5'-triphosphate = RNA(n+1) + diphosphate. Functionally, DNA-dependent RNA polymerase catalyzes the transcription of DNA into RNA using the four ribonucleoside triphosphates as substrates. The chain is DNA-directed RNA polymerase subunit beta' from Tropheryma whipplei (strain TW08/27) (Whipple's bacillus).